The following is a 195-amino-acid chain: MAFVLSLLMALVLVSYGPGGSLGCYLSQRLMLDAKENLKLLDRMNRLSPHSCLQDRKDFGLPQEMVEGDQLQKDQAFPVLYEMLQQSFNLFYTEHSSAAWDTTLLEQLCTGLQQQLDHLDTCRDQVMGEKDSELGNVDPIVTVKKYFQGIHDYLQEKGYSDCAWEIVRVEMMRALTVSTTLQKRLTKMGGDLNSP.

The signal sequence occupies residues 1 to 23 (MAFVLSLLMALVLVSYGPGGSLG). Cystine bridges form between C24–C122 and C52–C162.

This sequence belongs to the alpha/beta interferon family. IFN-alphaII subfamily. As to expression, constitutively and exclusively expressed in the mononuclear cells of the extraembryonic trophectoderm.

Its subcellular location is the secreted. Paracrine hormone primarily responsible for maternal recognition of pregnancy. Interacts with endometrial receptors, probably type I interferon receptors, and blocks estrogen receptor expression, preventing the estrogen-induced increase in oxytocin receptor expression in the endometrium. This results in the suppression of the pulsatile endometrial release of the luteolytic hormone prostaglandin F2-alpha, hindering the regression of the corpus luteum (luteolysis) and therefore a return to ovarian cyclicity. This, and a possible direct effect of IFN-tau on prostaglandin synthesis, leads in turn to continued ovarian progesterone secretion, which stimulates the secretion by the endometrium of the nutrients required for the growth of the conceptus. In summary, displays particularly high antiviral and antiproliferative potency concurrently with particular weak cytotoxicity, high antiluteolytic activity and immunomodulatory properties. In contrast with other IFNs, IFN-tau is not virally inducible. This Ovis aries (Sheep) protein is Interferon tau-5 (IFNT5).